We begin with the raw amino-acid sequence, 359 residues long: Probably inactive receptor-like protein kinase At5g41680 (359 aa).

The Protein kinase domain occupies Ala59–Phe357. ATP-binding positions include Leu65 to Thr73 and Lys87.

The protein belongs to the protein kinase superfamily. Ser/Thr protein kinase family.

The chain is Probably inactive receptor-like protein kinase At5g41680 from Arabidopsis thaliana (Mouse-ear cress).